The sequence spans 160 residues: UPF0178 protein BB1267 (160 aa).

The protein belongs to the UPF0178 family.

The sequence is that of UPF0178 protein BB1267 from Bordetella bronchiseptica (strain ATCC BAA-588 / NCTC 13252 / RB50) (Alcaligenes bronchisepticus).